The following is a 71-amino-acid chain: MPVIKVRENESFDVALRRFKRSCEKAGILAEVRAREFYEKPTTIRKRENATLAKRHAKRNARENARNTRLY.

The interval 48–71 is disordered; the sequence is ENATLAKRHAKRNARENARNTRLY. Positions 60–71 are enriched in basic and acidic residues; the sequence is NARENARNTRLY.

Belongs to the bacterial ribosomal protein bS21 family.

This chain is Small ribosomal subunit protein bS21, found in Haemophilus influenzae (strain 86-028NP).